The chain runs to 176 residues: Disulfide bond formation protein B (176 aa).

Residues 1–14 (MLRFLNQCSHGRGA) are Cytoplasmic-facing. Residues 15 to 31 (WLLMAFTALALELTALW) form a helical membrane-spanning segment. Topologically, residues 32-49 (FQHVMLLKPCVLCIYERC) are periplasmic. C41 and C44 are disulfide-bonded. A helical membrane pass occupies residues 50 to 65 (ALFGVLGAALIGAIAP). Over 66–71 (KTPLRY) the chain is Cytoplasmic. Residues 72–89 (VAMVIWLYSAFRGVQLTY) form a helical membrane-spanning segment. Residues 90–144 (EHTMLQLYPSPFATCDFMARFPEWLPLDKWVPQVFVASGDCAERQWEFLGLEMPQ) lie on the Periplasmic side of the membrane. An intrachain disulfide couples C104 to C130. Residues 145-163 (WLLGIFIAYLIVAVLVVIS) form a helical membrane-spanning segment. At 164–176 (QPFKAKKRDLFGR) the chain is on the cytoplasmic side.

This sequence belongs to the DsbB family.

The protein localises to the cell inner membrane. Functionally, required for disulfide bond formation in some periplasmic proteins. Acts by oxidizing the DsbA protein. The chain is Disulfide bond formation protein B from Escherichia coli O6:K15:H31 (strain 536 / UPEC).